The sequence spans 399 residues: Elongation factor Tu (399 aa).

In terms of domain architecture, tr-type G spans 10–204 (KPHVNIGTIG…AVDASIPEPE (195 aa)). Positions 19 to 26 (GHVDHGKT) are G1. 19–26 (GHVDHGKT) provides a ligand contact to GTP. A Mg(2+)-binding site is contributed by T26. The segment at 60-64 (GITIN) is G2. The tract at residues 81–84 (DCPG) is G3. Residues 81–85 (DCPGH) and 136–139 (NKCD) each bind GTP. The segment at 136–139 (NKCD) is G4. The segment at 174–176 (SGL) is G5.

This sequence belongs to the TRAFAC class translation factor GTPase superfamily. Classic translation factor GTPase family. EF-Tu/EF-1A subfamily. In terms of assembly, monomer.

Its subcellular location is the cytoplasm. The enzyme catalyses GTP + H2O = GDP + phosphate + H(+). Functionally, GTP hydrolase that promotes the GTP-dependent binding of aminoacyl-tRNA to the A-site of ribosomes during protein biosynthesis. The polypeptide is Elongation factor Tu (Prochlorococcus marinus (strain AS9601)).